Reading from the N-terminus, the 202-residue chain is Histone H1 (202 aa).

Disordered stretches follow at residues 1 to 50 and 114 to 202; these read MTAI…VTHP and YKLS…KIAV. Positions 18–38 are enriched in basic and acidic residues; the sequence is EASKVKEQAPATDKKPRAPKE. Residues 48-118 enclose the H15 domain; that stretch reads THPPYFQMIK…KIKASYKLSE (71 aa). Residues 160-202 are compositionally biased toward basic residues; that stretch reads KAKATPKPKKVGAKRTRKSTPAKAKQPKSIKSPAAKRAKKIAV.

Belongs to the histone H1/H5 family.

It is found in the nucleus. It localises to the chromosome. In terms of biological role, histones H1 are necessary for the condensation of nucleosome chains into higher-order structures. The chain is Histone H1 from Solanum pennellii (Tomato).